Consider the following 220-residue polypeptide: 7-cyano-7-deazaguanine synthase 1 (220 aa).

Position 10 to 20 (10 to 20) interacts with ATP; that stretch reads FSGGIDSTVLL. The Zn(2+) site is built by cysteine 183, cysteine 191, cysteine 194, and cysteine 197.

Belongs to the QueC family. As to quaternary structure, homodimer. Zn(2+) is required as a cofactor.

It carries out the reaction 7-carboxy-7-deazaguanine + NH4(+) + ATP = 7-cyano-7-deazaguanine + ADP + phosphate + H2O + H(+). Its pathway is purine metabolism; 7-cyano-7-deazaguanine biosynthesis. Its function is as follows. Catalyzes the ATP-dependent conversion of 7-carboxy-7-deazaguanine (CDG) to 7-cyano-7-deazaguanine (preQ(0)). The polypeptide is 7-cyano-7-deazaguanine synthase 1 (Desulfitobacterium hafniense (strain Y51)).